We begin with the raw amino-acid sequence, 91 residues long: Bombyxin C-1 (91 aa).

Positions 1 to 19 (MKLVMLLVVVSAMLVLGGA) are cleaved as a signal peptide. Gln20 is modified (pyrrolidone carboxylic acid). Cystine bridges form between Cys27/Cys76, Cys39/Cys89, and Cys75/Cys80. A propeptide spans 47 to 67 (SGSQYAGYGWPWLPPFSSSRG) (c peptide like).

Belongs to the insulin family. Heterodimer of a B chain and an A chain linked by two disulfide bonds.

It is found in the secreted. In terms of biological role, brain peptide responsible for activation of prothoracic glands to produce ecdysone in insects. The chain is Bombyxin C-1 (BBXC1) from Bombyx mori (Silk moth).